We begin with the raw amino-acid sequence, 179 residues long: Large ribosomal subunit protein uL5 (179 aa).

It belongs to the universal ribosomal protein uL5 family. In terms of assembly, part of the 50S ribosomal subunit; part of the 5S rRNA/L5/L18/L25 subcomplex. Contacts the 5S rRNA and the P site tRNA. Forms a bridge to the 30S subunit in the 70S ribosome.

In terms of biological role, this is one of the proteins that bind and probably mediate the attachment of the 5S RNA into the large ribosomal subunit, where it forms part of the central protuberance. In the 70S ribosome it contacts protein S13 of the 30S subunit (bridge B1b), connecting the 2 subunits; this bridge is implicated in subunit movement. Contacts the P site tRNA; the 5S rRNA and some of its associated proteins might help stabilize positioning of ribosome-bound tRNAs. The sequence is that of Large ribosomal subunit protein uL5 from Clostridium beijerinckii (strain ATCC 51743 / NCIMB 8052) (Clostridium acetobutylicum).